We begin with the raw amino-acid sequence, 315 residues long: Homoserine kinase (315 aa).

ATP is bound at residue 97 to 107 (PPARGLGSSAT).

It belongs to the GHMP kinase family. Homoserine kinase subfamily.

The protein localises to the cytoplasm. The catalysed reaction is L-homoserine + ATP = O-phospho-L-homoserine + ADP + H(+). Its pathway is amino-acid biosynthesis; L-threonine biosynthesis; L-threonine from L-aspartate: step 4/5. Its function is as follows. Catalyzes the ATP-dependent phosphorylation of L-homoserine to L-homoserine phosphate. In Prochlorococcus marinus (strain MIT 9515), this protein is Homoserine kinase.